The chain runs to 273 residues: GATA-type zinc finger protein 1 (273 aa).

Disordered stretches follow at residues 99–143 (RDSK…ERVD) and 172–201 (SSRS…AGSE). The GATA-type zinc-finger motif lies at 208-232 (CASCRTQRTPLWRDAEDGTPLCNAC).

It localises to the nucleus. Functionally, transcriptional regulator that plays a key role in germ cell development. Determines the oogenic fate by activating key genes for the oogenic program and meiotic prophase entry. Acts downstream of bone morphogenetic protein (BMP) by regulating expression of genes required for the oogenic programs, which are repressed by Polycomb activities in sexually uncommitted germ cells. Regulates expression of STRA8, a central downstream effector for the meiotic program. Acts independently of retinoic acid (RA). In males, not required for germ-cell sex determination, but required to allow the spermatogonia to efficiently accomplish the meiotic prophase. This Homo sapiens (Human) protein is GATA-type zinc finger protein 1.